A 1043-amino-acid polypeptide reads, in one-letter code: MNTEGESSKESLANREERILDFWKTHDIFQKSLKNREGKTLYSFYDGPPFATGLPHYGHLLAGTIKDVVGRFATMDGYYVPRRFGWDCHGVPVEYEVEKSLDLTTPGAIEDFGVAKFNEECRKIVFRYVDEWERYVHRLGRWVDFSVTWKTMDASFMESVWWVFRSLYDQGLVYEGVKVVPFSTKLGTPLSNFEAGQNYKEVDDPSVVIKFALHGDPASLLVWTTTPWTLVSNMAAAVGPEITYVRVADKVSGEQWILGQGCLSRWFSDPDSYEILESFLGTALVGKSYEPPFSFFEHKRAEGAYKILSGSFVEESEGTGVVHMAPAFGEADFFVCKEHHVPIVCPVDNHGCFTEEIPEYQGQYIKSCDKGIIKSLKNLGKVFYHGTVMHRYPFCWRTDTPLIYKTVNSWFVSVEKIKDKMLRANQKIHWVPEHIKEGRFGKWLDGARDWAISRNRYWGTPIPIWKSKEGEILVIGSVKELEELTGEKISDLHCHFIDQLKVEKEGKTFQRVPYVFDCWFDSGAMPYAQNHYPFENQKETEAGFPADFIAEGLDQTRGWFYTLTVISSALFDQTAFKNAIVNGIVLAEDGNKMSKRLNNYPSPMGIMNTYGADALRLYLLDSVVVKAEDLRFSDKGVESILKQILLPLTNVLSFFKTYTDLYGFDADNYDKEEITYSEIDRWILSNLYTVVGKVRESMSSYNLNTAVNPFVTFIDDLTNWYIRRCRRRFWESEDTPDRRAAFATLYEVLTVFCRVIAPFIPFISEDIYQQIKTEHSAESVHLCDFPHIDLAKVFPDLEQRMSDAREIVGLGHSLRKEHKLKVRQPLANFYIVGPKDRLDELTSFEQLIAEELNVKNIVFYKETPSFVKTTVKPNFRSLGRKVGEKIKDVQRALSNLSQDQIQQLLKQQYLLLNLGFEEITLGIDDVVISWETDPGYVARSSSLFTVVLDCQLTEDLIVEAISRELVNKINTMRRNHKLHVSDRILLQIHSSEDVEKAFLHYEDYICEETLTVQFEFKDSVEGEEWDINGHPTVIALTVASKAN.

Positions 49–59 match the 'HIGH' region motif; sequence PFATGLPHYGH. The short motif at 592-596 is the 'KMSKS' region element; it reads KMSKR. Lys595 lines the ATP pocket.

This sequence belongs to the class-I aminoacyl-tRNA synthetase family. IleS type 2 subfamily. As to quaternary structure, monomer. It depends on Zn(2+) as a cofactor.

It localises to the cytoplasm. It carries out the reaction tRNA(Ile) + L-isoleucine + ATP = L-isoleucyl-tRNA(Ile) + AMP + diphosphate. Catalyzes the attachment of isoleucine to tRNA(Ile). As IleRS can inadvertently accommodate and process structurally similar amino acids such as valine, to avoid such errors it has two additional distinct tRNA(Ile)-dependent editing activities. One activity is designated as 'pretransfer' editing and involves the hydrolysis of activated Val-AMP. The other activity is designated 'posttransfer' editing and involves deacylation of mischarged Val-tRNA(Ile). The sequence is that of Isoleucine--tRNA ligase from Chlamydia caviae (strain ATCC VR-813 / DSM 19441 / 03DC25 / GPIC) (Chlamydophila caviae).